A 117-amino-acid polypeptide reads, in one-letter code: uncharacterized protein (117 aa).

Transmembrane regions (helical) follow at residues 3 to 23 (AVPI…NILL), 40 to 60 (FLTP…LLFA), 66 to 86 (LEVS…LIIA), and 94 to 114 (PFHL…IFLA).

To E.coli and S.aureus ethidium bromide resistance proteins (ebr/QacC/EmrE/MvrC).

Its subcellular location is the cell membrane. This is an uncharacterized protein from Sinorhizobium fredii (strain NBRC 101917 / NGR234).